The chain runs to 510 residues: MTELTLKPGTLTLAQLRAIHAAPVRLQLDASAAPAIDASVACVEQIIAEDRTAYGINTGFGLLASTRIASHDLENLQRSLVLSHAAGIGAPLDDDLVRLIMVLKINSLSRGFSGIRRKVIDALIALVNAEVYPHIPLKGSVGASGDLAPLAHMSLVLLGEGKARYKGQWLPATEALAIAGLEPLTLAAKEGLALLNGTQASTAYALRGLFQAEDLYAAAIACGGLSVEAALGSRSPFDARVHEVRGQRGQIDTAACFRDLLGDSSEVSLSHKNCDKVQDPYSLRCQPQVMGACLTQLRQAAEVLGIEANAVSDNPLVFAAEGDVISGGNFHAEPVAMAADNLALAIAEIGSLSERRISLMMDKHMSQLPPFLVENGGVNSGFMIAQVTAAALASENKALSHPHSVDSLPTSANQEDHVSMAPAAGKRLWEMAENTRGVLAIEWLGACQGLDLRKGLKTSAKLEQARQALRSEVPHYDRDRFFAPDIEKAVDLLAKGSLTGLLPAGVLPSL.

A cross-link (5-imidazolinone (Ala-Gly)) is located at residues 143-145 (ASG). Ser-144 carries the post-translational modification 2,3-didehydroalanine (Ser).

The protein belongs to the PAL/histidase family. Post-translationally, contains an active site 4-methylidene-imidazol-5-one (MIO), which is formed autocatalytically by cyclization and dehydration of residues Ala-Ser-Gly.

The protein localises to the cytoplasm. It carries out the reaction L-histidine = trans-urocanate + NH4(+). It participates in amino-acid degradation; L-histidine degradation into L-glutamate; N-formimidoyl-L-glutamate from L-histidine: step 1/3. The sequence is that of Histidine ammonia-lyase from Pseudomonas putida (strain ATCC 47054 / DSM 6125 / CFBP 8728 / NCIMB 11950 / KT2440).